The sequence spans 316 residues: Protein lifeguard 2 (316 aa).

Positions 1–46 (MTQGKLSVANKAPGTEGQQQANGEKKETPAVPSAPPSYEEATSGEG) are disordered. 3 helical membrane-spanning segments follow: residues 106–126 (VYTILLIQLLVTLGVVALFTF), 138–158 (PGWYWASYAVFFATYLTLACC), and 165–185 (FPWNLILLTIFTLSMAYLTGM). N-linked (GlcNAc...) asparagine glycosylation is present at Asn-191. The next 4 membrane-spanning stretches (helical) occupy residues 194–214 (SVLLCLSITALVCLSVTVFSF), 225–245 (GVLFVLLMTLFFSGLILAILL), 251–271 (PWLHAVYAVLGAGVFTLFLAF), and 290–310 (IFGALNIYLDIIYIFTFFLQL).

This sequence belongs to the BI1 family. LFG subfamily. In terms of assembly, interacts with FAS/TNFRSF6 and BAX.

It localises to the cell membrane. The protein localises to the membrane raft. It is found in the postsynaptic cell membrane. Antiapoptotic protein which protects cells uniquely from Fas-induced apoptosis. Regulates Fas-mediated apoptosis in neurons by interfering with caspase-8 activation. Plays a role in cerebellar development by affecting cerebellar size, internal granular layer (IGL) thickness, and Purkinje cell (PC) development. This is Protein lifeguard 2 (FAIM2) from Bos taurus (Bovine).